Here is a 396-residue protein sequence, read N- to C-terminus: Dual specificity mitogen-activated protein kinase kinase dSOR1 (396 aa).

The segment at 25–44 is disordered; it reads APTPPFKTPSGTDTHSLLGK. The 278-residue stretch at 87–364 folds into the Protein kinase domain; the sequence is LEKLGELGSG…LKTLLSHPWI (278 aa). Residues 93 to 101 and K116 each bind ATP; that span reads LGSGNGGVV. Catalysis depends on D209, which acts as the Proton acceptor. 2 positions are modified to phosphoserine; by RAF: S237 and S241.

It belongs to the protein kinase superfamily. STE Ser/Thr protein kinase family. MAP kinase kinase subfamily. Interacts with Raf and ksr; Dsor1 binding to ksr probably promotes ksr and Raf dimerization and ksr-mediated Raf transactivation. In terms of processing, phosphorylation on Ser/Thr by MAP kinase kinase kinases regulates positively the kinase activity.

The catalysed reaction is L-seryl-[protein] + ATP = O-phospho-L-seryl-[protein] + ADP + H(+). It catalyses the reaction L-threonyl-[protein] + ATP = O-phospho-L-threonyl-[protein] + ADP + H(+). The enzyme catalyses L-tyrosyl-[protein] + ATP = O-phospho-L-tyrosyl-[protein] + ADP + H(+). Required downstream of Raf in the sevenless (sev), torso (tor), and Drosophila EGF receptor homolog (DER) signal transduction pathways. Involved in both positive regulation (at the posterior terminus) and negative regulation (at the anterior domain) of tll, as in other terminal class gene products, maybe via the ERK-A kinase. The sequence is that of Dual specificity mitogen-activated protein kinase kinase dSOR1 (Dsor1) from Drosophila melanogaster (Fruit fly).